The following is a 279-amino-acid chain: 1D-myo-inositol 2-acetamido-2-deoxy-alpha-D-glucopyranoside deacetylase (279 aa).

Residues H12, D15, and H146 each coordinate Zn(2+).

It belongs to the MshB deacetylase family. It depends on Zn(2+) as a cofactor.

It catalyses the reaction 1D-myo-inositol 2-acetamido-2-deoxy-alpha-D-glucopyranoside + H2O = 1D-myo-inositol 2-amino-2-deoxy-alpha-D-glucopyranoside + acetate. Functionally, catalyzes the deacetylation of 1D-myo-inositol 2-acetamido-2-deoxy-alpha-D-glucopyranoside (GlcNAc-Ins) in the mycothiol biosynthesis pathway. This chain is 1D-myo-inositol 2-acetamido-2-deoxy-alpha-D-glucopyranoside deacetylase, found in Mycobacteroides abscessus (strain ATCC 19977 / DSM 44196 / CCUG 20993 / CIP 104536 / JCM 13569 / NCTC 13031 / TMC 1543 / L948) (Mycobacterium abscessus).